The following is a 152-amino-acid chain: Deoxyuridine 5'-triphosphate nucleotidohydrolase (152 aa).

Substrate contacts are provided by residues 70–72 (RSG), asparagine 83, 87–89 (TID), and lysine 97.

Belongs to the dUTPase family. Requires Mg(2+) as cofactor.

It catalyses the reaction dUTP + H2O = dUMP + diphosphate + H(+). The protein operates within pyrimidine metabolism; dUMP biosynthesis; dUMP from dCTP (dUTP route): step 2/2. This enzyme is involved in nucleotide metabolism: it produces dUMP, the immediate precursor of thymidine nucleotides and it decreases the intracellular concentration of dUTP so that uracil cannot be incorporated into DNA. This is Deoxyuridine 5'-triphosphate nucleotidohydrolase from Corynebacterium diphtheriae (strain ATCC 700971 / NCTC 13129 / Biotype gravis).